The chain runs to 150 residues: Large ribosomal subunit protein bL9 (150 aa).

It belongs to the bacterial ribosomal protein bL9 family.

In terms of biological role, binds to the 23S rRNA. This Corynebacterium diphtheriae (strain ATCC 700971 / NCTC 13129 / Biotype gravis) protein is Large ribosomal subunit protein bL9.